A 319-amino-acid chain; its full sequence is MKKSITTLDLNLLLCLQLLMQERSVTKAAKRMNVTPSAVSKSLAKLRAWFDDPLFVNSPLGLSPTPLMVSMEQNLAEWMQMSNLLLDKPHHQTPRGLKFELAAESPLMMIMLNALSKRIYQRYPQATIKLRNWDYDSLDAITRGEVDIGFSGRESHPRSRELLSSLPLAIDYEVLFSDVPCVWLRKDHPALHETWNLDTFLRYPHISICWEQSDTWALDNVLQELGRERTIAMSLPEFEQSLFMAAQPDNLLLATAPRYCQYYNQLHQLPLVALPLPFDESQQKKLEVPFTLLWHKRNSHNPKIVWLRETIKNLYASMA.

One can recognise an HTH lysR-type domain in the interval 8–65 (LDLNLLLCLQLLMQERSVTKAAKRMNVTPSAVSKSLAKLRAWFDDPLFVNSPLGLSPT). The segment at residues 25 to 44 (VTKAAKRMNVTPSAVSKSLA) is a DNA-binding region (H-T-H motif).

The protein belongs to the LysR transcriptional regulatory family.

In terms of biological role, involved in anaerobic NO protection. This chain is HTH-type transcriptional regulator YidZ, found in Escherichia coli O139:H28 (strain E24377A / ETEC).